The following is a 491-amino-acid chain: Cytochrome P450 2F2 (491 aa).

Cys-436 is a heme binding site.

Belongs to the cytochrome P450 family. Heme is required as a cofactor.

It is found in the endoplasmic reticulum membrane. The protein resides in the microsome membrane. Its function is as follows. Involved in the regio- and stereoselective transformation of naphthalene to trans-1R-hydroxy-2R-glutathionyl-1,2-dihydronaphthalene in the presence of glutathione and glutathione S-transferases. It specifically catalyzes the production of a very reactive and potentially toxic intermediate, the 2R,2S arene oxide, that is associated with necrosis of the unciliated bronchiolar epithelial cells or club cells in lung. The polypeptide is Cytochrome P450 2F2 (Cyp2f2) (Rattus norvegicus (Rat)).